Reading from the N-terminus, the 328-residue chain is Cysteine proteinase COT44 (328 aa).

Positions 1–99 (MSIYLRWSLE…KYSAAVNVDE (99 aa)) are cleaved as a propeptide — activation peptide. N-linked (GlcNAc...) asparagine glycosylation is found at Asn48 and Asn60. Disulfide bonds link Cys121–Cys163, Cys155–Cys196, and Cys254–Cys305. Cys124 is a catalytic residue. Residues His260 and Asn280 contribute to the active site.

The protein belongs to the peptidase C1 family. As to expression, present in both cotyledons and axes.

Its function is as follows. May function in an early event in cortical cell differentiation. The sequence is that of Cysteine proteinase COT44 from Brassica napus (Rape).